Consider the following 584-residue polypeptide: Actin-binding protein IPP (584 aa).

The BTB domain occupies 37–104 (CDVQLQVGKE…IYTGVVNIAV (68 aa)). 6 Kelch repeats span residues 296–343 (YTRL…VVGG), 344–390 (MVYA…VCYG), 391–437 (AIYA…EMQG), 439–485 (IYAV…ALND), 487–533 (IYAI…TVNG), and 535–583 (LYVS…GVAV).

As to expression, expression seems confined to tissues derived from trophectoderm and primitive endoderm.

The protein localises to the cytoplasm. The protein resides in the cytoskeleton. May play a role in organizing the actin cytoskeleton. In Mus musculus (Mouse), this protein is Actin-binding protein IPP (Ipp).